The following is a 467-amino-acid chain: MVQKQQASAGPGTEPKKRRRVGFSPADTGVEANECIKIYLVSSKEEVDSSDISSVKPVDLNDFFDGDGKIYGYQGLKINVWINSISLHSYADITYQSTINGDKGITDLKSALQNIFAETIVDTKDEFLQTFSTQRDFIRNMVSNGEVMHAGATDGSSKNAEVVPSDPQVIRMEIGSPNAGLLYSRLVPLVLLFVDGSNPIDVTDPDWHLYLLIQKKEEKEDPLYRIVGFTAIYKFYRYPDRLRMRLSQILVLPSFQGKGLGSYLMEVVNNVAITENVYDLTVEEPSEKFQHIRTCIDINRLRSFDPIKPDIDSAVQTLTKGKLSKKAQIPRFTPPLNAIEKVRESLKINKKQFLKCWEILIYLALDPIDKYMEDYTSVITNHVRTDILGKDIETPKKQVVDVPSSFEPEASFVVFKSVNGEEANTNVQVDENKPDQEQQLKQLVEERIREIKLVAEKVSKSGQTLKV.

The interval 1–24 (MVQKQQASAGPGTEPKKRRRVGFS) is disordered. Acetyl-CoA-binding positions include 249-251 (ILV) and 256-262 (QGKGLGS). The active-site Proton donor/acceptor is the Glu283.

The protein belongs to the HAT1 family.

It is found in the nucleus. The protein localises to the cytoplasm. The enzyme catalyses L-lysyl-[protein] + acetyl-CoA = N(6)-acetyl-L-lysyl-[protein] + CoA + H(+). Its function is as follows. Acetylates soluble but not nucleosomal H4. Acetylates 'Lys-12' of histone H4. This is Histone acetyltransferase type B catalytic subunit (HAG2) from Arabidopsis thaliana (Mouse-ear cress).